The following is a 377-amino-acid chain: TraB domain-containing protein (377 aa).

Methionine 1 is modified (N-acetylmethionine). Positions methionine 1–proline 34 are disordered. Residue threonine 65 is modified to Phosphothreonine.

In Bos taurus (Bovine), this protein is TraB domain-containing protein (TRABD).